The chain runs to 100 residues: MTLTKAELADILVDKVSNVTKNDAKEIVELFFEEIRSTLASGEEIKISGFGNFQLRDKPQRPGRNPKTGEEVPITARRVVTFHASQKLKGMVEHYYDKQR.

A disordered region spans residues 53-72 (FQLRDKPQRPGRNPKTGEEV).

Belongs to the bacterial histone-like protein family. In terms of assembly, heterodimer of an alpha and a beta chain.

Its function is as follows. This protein is one of the two subunits of integration host factor, a specific DNA-binding protein that functions in genetic recombination as well as in transcriptional and translational control. This Neisseria gonorrhoeae (strain ATCC 700825 / FA 1090) protein is Integration host factor subunit alpha.